We begin with the raw amino-acid sequence, 71 residues long: Small ribosomal subunit protein bS21 (71 aa).

The disordered stretch occupies residues 38 to 71 (YEKPTTERKRARASAIKRHAKKLARENARRTRLY). Residues 46-59 (KRARASAIKRHAKK) are compositionally biased toward basic residues. Residues 60-71 (LARENARRTRLY) show a composition bias toward basic and acidic residues.

This sequence belongs to the bacterial ribosomal protein bS21 family.

The sequence is that of Small ribosomal subunit protein bS21 from Hamiltonella defensa subsp. Acyrthosiphon pisum (strain 5AT).